We begin with the raw amino-acid sequence, 213 residues long: Pyridoxine/pyridoxamine 5'-phosphate oxidase (213 aa).

Residues 8 to 11 (RKNY) and Lys66 contribute to the substrate site. FMN is bound by residues 61-66 (RIVLIK), 76-77 (FT), Arg82, Lys83, and Gln105. Positions 123, 127, and 131 each coordinate substrate. Residues 140–141 (QS) and Trp184 each bind FMN. 190–192 (RLH) is a binding site for substrate. An FMN-binding site is contributed by Arg194.

This sequence belongs to the pyridoxamine 5'-phosphate oxidase family. Homodimer. FMN is required as a cofactor.

It catalyses the reaction pyridoxamine 5'-phosphate + O2 + H2O = pyridoxal 5'-phosphate + H2O2 + NH4(+). The catalysed reaction is pyridoxine 5'-phosphate + O2 = pyridoxal 5'-phosphate + H2O2. It participates in cofactor metabolism; pyridoxal 5'-phosphate salvage; pyridoxal 5'-phosphate from pyridoxamine 5'-phosphate: step 1/1. Its pathway is cofactor metabolism; pyridoxal 5'-phosphate salvage; pyridoxal 5'-phosphate from pyridoxine 5'-phosphate: step 1/1. Its function is as follows. Catalyzes the oxidation of either pyridoxine 5'-phosphate (PNP) or pyridoxamine 5'-phosphate (PMP) into pyridoxal 5'-phosphate (PLP). The sequence is that of Pyridoxine/pyridoxamine 5'-phosphate oxidase from Paraburkholderia xenovorans (strain LB400).